Reading from the N-terminus, the 489-residue chain is Mitochondrial distribution and morphology protein 12 (489 aa).

Residues 1-489 (MSIDLNWEAA…VFPSFWTFLV (489 aa)) form the SMP-LTD domain. The span at 72 to 82 (ESDSEDEDEGH) shows a compositional bias: acidic residues. 3 disordered regions span residues 72–97 (ESDS…AAAD), 201–313 (WPDA…MRER), and 394–432 (DINH…QPRR). Over residues 231 to 249 (LDTGSPSRPSTANTNPTQL) the composition is skewed to polar residues. Composition is skewed to low complexity over residues 250–265 (SHGQ…NTSN) and 398–424 (QQRQ…NNPE).

The protein belongs to the MDM12 family. Component of the ER-mitochondria encounter structure (ERMES) or MDM complex, composed of MMM1, MDM10, mdm12 and MDM34. An MMM1 homodimer associates with one molecule of mdm12 on each side in a pairwise head-to-tail manner, and the SMP-LTD domains of MMM1 and mdm12 generate a continuous hydrophobic tunnel for phospholipid trafficking.

It is found in the mitochondrion outer membrane. Its subcellular location is the endoplasmic reticulum membrane. Functionally, component of the ERMES/MDM complex, which serves as a molecular tether to connect the endoplasmic reticulum (ER) and mitochondria. Components of this complex are involved in the control of mitochondrial shape and protein biogenesis, and function in nonvesicular lipid trafficking between the ER and mitochondria. mdm12 is required for the interaction of the ER-resident membrane protein MMM1 and the outer mitochondrial membrane-resident beta-barrel protein MDM10. The mdm12-MMM1 subcomplex functions in the major beta-barrel assembly pathway that is responsible for biogenesis of all mitochondrial outer membrane beta-barrel proteins, and acts in a late step after the SAM complex. The MDM10-mdm12-MMM1 subcomplex further acts in the TOM40-specific pathway after the action of the mdm12-MMM1 complex. Essential for establishing and maintaining the structure of mitochondria and maintenance of mtDNA nucleoids. This Talaromyces marneffei (strain ATCC 18224 / CBS 334.59 / QM 7333) (Penicillium marneffei) protein is Mitochondrial distribution and morphology protein 12.